Consider the following 412-residue polypeptide: 23S rRNA (uracil(747)-C(5))-methyltransferase (412 aa).

[4Fe-4S] cluster contacts are provided by Cys63, Cys69, Cys72, and Cys139. S-adenosyl-L-methionine contacts are provided by Gln255, Tyr281, Glu302, and Asp343. Cys369 (nucleophile) is an active-site residue.

This sequence belongs to the class I-like SAM-binding methyltransferase superfamily. RNA M5U methyltransferase family.

The enzyme catalyses uridine(747) in 23S rRNA + S-adenosyl-L-methionine = 5-methyluridine(747) in 23S rRNA + S-adenosyl-L-homocysteine + H(+). Functionally, catalyzes the formation of 5-methyl-uridine at position equivalent to 747 (m5U747) in 23S rRNA. In Pyrococcus horikoshii (strain ATCC 700860 / DSM 12428 / JCM 9974 / NBRC 100139 / OT-3), this protein is 23S rRNA (uracil(747)-C(5))-methyltransferase.